Reading from the N-terminus, the 147-residue chain is Hemoglobin subunit gamma-1 (147 aa).

N-acetylglycine is present on Gly2. In terms of domain architecture, Globin spans 3-147 (HFTEEDKATI…VASALSSRYH (145 aa)). Position 13 is a phosphothreonine (Thr13). Ser45, Ser51, and Ser53 each carry phosphoserine. At Lys60 the chain carries N6-acetyllysine. A heme b-binding site is contributed by His64. Residue Lys83 is modified to N6-acetyllysine. Position 93 (His93) interacts with heme b. Cys94 bears the S-nitrosocysteine mark. Ser140 carries the post-translational modification Phosphoserine.

This sequence belongs to the globin family. In terms of assembly, heterotetramer of two alpha chains and two gamma chains in fetal hemoglobin (Hb F). In terms of tissue distribution, red blood cells.

Its function is as follows. Gamma chains make up the fetal hemoglobin F, in combination with alpha chains. The sequence is that of Hemoglobin subunit gamma-1 (HBG1) from Pongo pygmaeus (Bornean orangutan).